The following is a 625-amino-acid chain: Endoglucanase 13 (625 aa).

A signal peptide spans 1 to 34 (MAATMNKTPATTFLLIPAAASLVLLLAAAASVEA). The active-site Nucleophile is Asp91. His427 is a catalytic residue. A glycan (N-linked (GlcNAc...) asparagine) is linked at Asn440. Catalysis depends on residues Asp479 and Glu488. Residues 509-530 (ADNTPEYTPAPNAPSPSNGGSP) are disordered.

This sequence belongs to the glycosyl hydrolase 9 (cellulase E) family.

The protein localises to the secreted. The enzyme catalyses Endohydrolysis of (1-&gt;4)-beta-D-glucosidic linkages in cellulose, lichenin and cereal beta-D-glucans.. This Oryza sativa subsp. indica (Rice) protein is Endoglucanase 13 (GLU6).